The following is a 292-amino-acid chain: MNTESLALDFKSATLYAIRVVLHDADTTRLRAALDKRMADAGSFFENEPVVIDATRVDAPVDWPALLQALADHNLPPIGVVAEGANLQGARDAGLVPVELSTSVARAPQVIDTAPPNDVATPVPSVPEATAEATAKAGPQDDEADGEQADEAPAHNPESVPTRAARETTEANRPTATPPQSSSALVITKPLRSGQRVYARHTDLIVIGMVSQGAEVIADGNVHVYGPLRGKAMAGARGDTSARIFTTQLDAELLAVAGVYRVVEDKLDRALHNQPALVRLDGDTLRIEALKG.

The segment at 109–188 is disordered; that stretch reads QVIDTAPPND…PQSSSALVIT (80 aa). The segment covering 140–150 has biased composition (acidic residues); it reads QDDEADGEQAD. Residues 171-185 are compositionally biased toward polar residues; the sequence is ANRPTATPPQSSSAL.

The protein belongs to the MinC family. As to quaternary structure, interacts with MinD and FtsZ.

In terms of biological role, cell division inhibitor that blocks the formation of polar Z ring septums. Rapidly oscillates between the poles of the cell to destabilize FtsZ filaments that have formed before they mature into polar Z rings. Prevents FtsZ polymerization. The protein is Probable septum site-determining protein MinC of Bordetella pertussis (strain Tohama I / ATCC BAA-589 / NCTC 13251).